Consider the following 384-residue polypeptide: Putative exopolyphosphatase (384 aa).

The Mn(2+) site is built by Asp-40, Asp-42, Asp-116, His-138, and Asp-200.

Belongs to the PPase class C family. Requires Mn(2+) as cofactor.

It catalyses the reaction [phosphate](n) + H2O = [phosphate](n-1) + phosphate + H(+). Degradation of inorganic polyphosphates. In Schizosaccharomyces pombe (strain 972 / ATCC 24843) (Fission yeast), this protein is Putative exopolyphosphatase.